A 334-amino-acid chain; its full sequence is Protein-methionine-sulfoxide reductase catalytic subunit MsrP (334 aa).

The segment at residues 1–44 is a signal peptide (tat-type signal); it reads MKKNQFLKESDVTAESVFFMKRRQVLKALGISAAALSLPHAAHA. Mo-molybdopterin is bound by residues Asn88, 91–92, Cys146, Thr181, Asn233, Arg238, and 249–251; these read YE and GIK.

Belongs to the MsrP family. Heterodimer of a catalytic subunit (MsrP) and a heme-binding subunit (MsrQ). Mo-molybdopterin serves as cofactor. In terms of processing, predicted to be exported by the Tat system. The position of the signal peptide cleavage has not been experimentally proven.

It is found in the periplasm. The enzyme catalyses L-methionyl-[protein] + a quinone + H2O = L-methionyl-(S)-S-oxide-[protein] + a quinol. It carries out the reaction L-methionyl-[protein] + a quinone + H2O = L-methionyl-(R)-S-oxide-[protein] + a quinol. Functionally, part of the MsrPQ system that repairs oxidized periplasmic proteins containing methionine sulfoxide residues (Met-O), using respiratory chain electrons. Thus protects these proteins from oxidative-stress damage caused by reactive species of oxygen and chlorine generated by the host defense mechanisms. MsrPQ is essential for the maintenance of envelope integrity under bleach stress, rescuing a wide series of structurally unrelated periplasmic proteins from methionine oxidation, including the primary periplasmic chaperone SurA and the lipoprotein Pal. The catalytic subunit MsrP is non-stereospecific, being able to reduce both (R-) and (S-) diastereoisomers of methionine sulfoxide. The sequence is that of Protein-methionine-sulfoxide reductase catalytic subunit MsrP from Shigella boydii serotype 18 (strain CDC 3083-94 / BS512).